Reading from the N-terminus, the 111-residue chain is MESTAKLSFARLSPRKTRLVVDMVRGKGIQNALNTLRFSPQPSAKLVSKLLSSAVANAEQKGVADVDRLYVKTIYVDGGTVLKRFVPRAMGRASKIRKPTSHICVVLAEKK.

The protein belongs to the universal ribosomal protein uL22 family. Part of the 50S ribosomal subunit.

This protein binds specifically to 23S rRNA; its binding is stimulated by other ribosomal proteins, e.g. L4, L17, and L20. It is important during the early stages of 50S assembly. It makes multiple contacts with different domains of the 23S rRNA in the assembled 50S subunit and ribosome. Functionally, the globular domain of the protein is located near the polypeptide exit tunnel on the outside of the subunit, while an extended beta-hairpin is found that lines the wall of the exit tunnel in the center of the 70S ribosome. The polypeptide is Large ribosomal subunit protein uL22 (Geotalea daltonii (strain DSM 22248 / JCM 15807 / FRC-32) (Geobacter daltonii)).